The following is a 959-amino-acid chain: Isoleucine--tRNA ligase (959 aa).

The short motif at Pro-60–His-70 is the 'HIGH' region element. Residue Glu-571 coordinates L-isoleucyl-5'-AMP. A 'KMSKS' region motif is present at residues Lys-612–Ser-616. Lys-615 is a binding site for ATP. 4 residues coordinate Zn(2+): Cys-928, Cys-931, Cys-948, and Cys-951.

This sequence belongs to the class-I aminoacyl-tRNA synthetase family. IleS type 1 subfamily. In terms of assembly, monomer. Zn(2+) serves as cofactor.

Its subcellular location is the cytoplasm. The enzyme catalyses tRNA(Ile) + L-isoleucine + ATP = L-isoleucyl-tRNA(Ile) + AMP + diphosphate. Its function is as follows. Catalyzes the attachment of isoleucine to tRNA(Ile). As IleRS can inadvertently accommodate and process structurally similar amino acids such as valine, to avoid such errors it has two additional distinct tRNA(Ile)-dependent editing activities. One activity is designated as 'pretransfer' editing and involves the hydrolysis of activated Val-AMP. The other activity is designated 'posttransfer' editing and involves deacylation of mischarged Val-tRNA(Ile). The sequence is that of Isoleucine--tRNA ligase from Nostoc punctiforme (strain ATCC 29133 / PCC 73102).